A 128-amino-acid chain; its full sequence is Con-Ins F2 (128 aa).

The signal sequence occupies residues 1–24 (MTTSSYFLLVALGLLLYVCRSSFG). 4 disulfides stabilise this stretch: cysteine 29–cysteine 104, cysteine 41–cysteine 107, cysteine 53–cysteine 120, and cysteine 106–cysteine 111. The propeptide at 59–89 (LQGGTGKKRGRASLLRKRRAFLSMLKARAKR) is c peptide. Glutamate 115 carries the post-translational modification 4-carboxyglutamate; partial. Serine 127 is subject to Serine amide.

Belongs to the insulin family. In terms of assembly, heterodimer of A and B chains; disulfide-linked. In terms of tissue distribution, expressed by the venom gland.

It localises to the secreted. This venom insulin facilitates prey capture by rapidly inducing hypoglycemic shock. Intraperitoneal injection of this peptide into zebrafish lowers blood glucose with the same potency than human insulin. In vivo, when applied to water, this peptide reduces overall locomotor activity of zebrafish larvae, observed as a significant decrease in the percentage of time spent swimming and movement frequency. This Conus floridulus (Cone snail) protein is Con-Ins F2.